The chain runs to 1825 residues: MKSNTNIRVLLVSGLILIFIFLGIKFEFINKNNNDKIGINRKLEFSYFTKNNNNNNNNNFKQDQLKNKKDKRILLKNEIIDTNIKKNIKKNNQKNNNEEIFPNFISRLLKSNDDMEIQQFTYRKSHYIVQFKDHINDETREQFKQFLINTDIVLDEQPYQSHIVNYIPHDSFLVLMNDEQSNLLSSKEWVSWIGEFEPSNKIHLNYNEKSIGLPVYIKLSDSTNSLIQRWENTLNSILTSYNSKVKLTLINQKKLKSIVYCNDESSSQSSCSLVSSEKLVYQWISEQSESNYIERSEKFQTANRLSPKAIFGTKDTLVNNDRIDIPLRGKGQILSIADTGLDGSHCFFSDSNNPIPYNSVNLNHRKVVTYIGSLHDNEDYVDGHGTHVCGSAAGAPEDSSLAISSFSGLATDAKIAFFDLASDPSNNEPVPPEDYSQLYQPLYNAGARVHGDSWGSLSIQGYLGSYSDDAGSIDDFLYTHPDFIILRAAGNNEQYSSLLSQATAKNVITVGAEQTTHESYTTDALEYSNFETVAKSTLNSLCQSFDDKYCTYTTAQCCTEYSTVKGLSGCCTSYIKNSYASIFSSQPELYNENNICSFSSKGPTHDGRLKPDIVAPGQYITSARSNGANTTDQCGDGSLPNTNALLSESGTSMATPLATAATTILRQYLVDGYYPTGSIVESNKLQPTGSLLKALMINNAQLLNGTFPLSSTNTNPSNAVFDTFAGANFVQGWGSLRMSEWLYVESSGVKPKPSRWVGIGELGKDKKASNWKEYSLSTGQNVSYCFTYKPSSSGSNSGGIPRIVATLVWTDPPSYSGAKLNLVNNLDLTMTNTESEFIFYSNSGGSSYNGTKGTTLPLQDSINNVEGIIYTPINTKSEISFRFIIAGTNIPIGPQNFSFVFHGENGEFDWADSCMQCNPDDTQPCFIENGVGSQTCGDDYLWGRCLVQSCNNNYNYNSISDKCSKFLSYNYIVIIVAGGTMSLIITVLILIKYMEYKENGNKFSLKEFFSGVLGTGKNVSGGGKGGSGGSGSGSGTLKDGTIDDGTGIHVRPKPKDAPVTPPDLYSLLSPFIIEITISTACSLVATAASILQPYYIGQIIQDIPTTKGIGDLRDQFIIIFLLALLEFVFSTISSWISGIVNEKMVMRLQNKVFRALIAQDMGFFQKNSAAVLMNVLIVDTPMLRSSLTGILLSVSVGICKFVGSLVFIFTISWKLSLAFFATVPVLAIVTQVQSKFTKRLTRRLLFHNSKASQHGQESMVNMHVVSNYCKQDREIAKYSEQLMMVFQISRRLIINNTFAASIKWLMVESLAFIILYFGAYLAIQKQFTVGLLVSFSLYIGYVIDSSTTLFGVYSSYVQCLASATRVFLILRSAPRKRTTLEEEELDNIIDTNQDNNNNNNNDDISDSSSDDDDDNNNNKNSKNNKTKSGESDDSSSEDAEYKKNKNKRNNGKMTTKLSNSPPLVGEGIDNNNNNNNDNNINDDNNQQDPNNNNNEIDDDGDDDGDDDDEGEDENNNNNNNDDPNDNNGIEMLTEKQLRKRKRQMKKEFYKKTGISCLELNLIPSAYTELTECRGEIEFKNVSFCYPSRADVGVLYNIDLKFESGKCYGLVGPSGSGKSTLLELISRFYSLHPSGGKIYMDGIDIAKIRPSNLRSFVTNVHQHPFLFDATISENIGYALDNPTQEDIIEAAKLANAHEFIQSLPKQYDTMLTDGGNLSGGQKKRIAVARAICAKRKIMLLDEITAELDPESEEAINKSIKVLTRGHTVVMVAHKVAAVRDCDKIFVLDKGQIVEQGTHNQLMAKKGKYYRMFAFSEDDDYAPLLVL.

Positions 1 to 26 (MKSNTNIRVLLVSGLILIFIFLGIKF) are cleaved as a signal peptide. Positions 307-727 (PKAIFGTKDT…NAVFDTFAGA (421 aa)) constitute a Peptidase S8 domain. Active-site charge relay system residues include aspartate 338 and histidine 384. A glycan (N-linked (GlcNAc...) asparagine) is linked at asparagine 629. Residue serine 652 is the Charge relay system of the active site. N-linked (GlcNAc...) asparagine glycosylation is found at asparagine 704, asparagine 781, asparagine 849, and asparagine 896. A helical transmembrane segment spans residues 971-991 (YIVIIVAGGTMSLIITVLILI). N-linked (GlcNAc...) asparagine glycosylation occurs at asparagine 1018. The next 4 helical transmembrane spans lie at 1071-1091 (FIIEITISTACSLVATAASIL), 1116-1136 (FIIIFLLALLEFVFSTISSWI), 1189-1209 (GILLSVSVGICKFVGSLVFIF), and 1210-1230 (TISWKLSLAFFATVPVLAIVT). The 284-residue stretch at 1075–1358 (ITISTACSLV…LFGVYSSYVQ (284 aa)) folds into the ABC transmembrane type-1 domain. The N-linked (GlcNAc...) asparagine glycan is linked to asparagine 1295. The next 2 helical transmembrane spans lie at 1304-1324 (WLMVESLAFIILYFGAYLAIQ) and 1327-1347 (FTVGLLVSFSLYIGYVIDSST). The disordered stretch occupies residues 1386–1529 (DNIIDTNQDN…NDDPNDNNGI (144 aa)). Positions 1388–1402 (IIDTNQDNNNNNNND) are enriched in low complexity. Positions 1403 to 1415 (DISDSSSDDDDDN) are enriched in acidic residues. Asparagine 1424 is a glycosylation site (N-linked (GlcNAc...) asparagine). Low complexity predominate over residues 1465–1494 (GEGIDNNNNNNNDNNINDDNNQQDPNNNNN). A compositionally biased stretch (acidic residues) spans 1495 to 1514 (EIDDDGDDDGDDDDEGEDEN). Residues 1515–1529 (NNNNNNDDPNDNNGI) are compositionally biased toward low complexity. The ABC transporter domain occupies 1576–1813 (IEFKNVSFCY…KGKYYRMFAF (238 aa)). A glycan (N-linked (GlcNAc...) asparagine) is linked at asparagine 1580. 1611 to 1618 (GPSGSGKS) is a binding site for ATP. N-linked (GlcNAc...) asparagine glycosylation is found at asparagine 1715 and asparagine 1755.

In the C-terminal section; belongs to the ABC transporter superfamily. ABCB family. Multidrug resistance exporter (TC 3.A.1.201) subfamily. This sequence in the N-terminal section; belongs to the peptidase S8 family.

The protein localises to the membrane. The chain is Serine protease/ABC transporter B family protein tagD (tagD) from Dictyostelium discoideum (Social amoeba).